The sequence spans 185 residues: Peptidyl-tRNA hydrolase (185 aa).

Tyr-14 lines the tRNA pocket. His-19 serves as the catalytic Proton acceptor. Residues Tyr-65, Asn-67, and Asn-113 each coordinate tRNA.

This sequence belongs to the PTH family. Monomer.

Its subcellular location is the cytoplasm. It carries out the reaction an N-acyl-L-alpha-aminoacyl-tRNA + H2O = an N-acyl-L-amino acid + a tRNA + H(+). Functionally, hydrolyzes ribosome-free peptidyl-tRNAs (with 1 or more amino acids incorporated), which drop off the ribosome during protein synthesis, or as a result of ribosome stalling. Its function is as follows. Catalyzes the release of premature peptidyl moieties from peptidyl-tRNA molecules trapped in stalled 50S ribosomal subunits, and thus maintains levels of free tRNAs and 50S ribosomes. The protein is Peptidyl-tRNA hydrolase of Rickettsia felis (strain ATCC VR-1525 / URRWXCal2) (Rickettsia azadi).